We begin with the raw amino-acid sequence, 230 residues long: Claudin-2 (230 aa).

Residues 1 to 7 (MASLGLQ) lie on the Cytoplasmic side of the membrane. Residues 8–28 (LVGYILGLLGLLGTLVAMLLP) traverse the membrane as a helical segment. Residues 29–81 (SWRTSSYVGTSIVTAVGFSKGLWMECATHSTGITQCDIYSTLLGLPADIQAAQ) lie on the Extracellular side of the membrane. A disulfide bond links C54 and C64. The helical transmembrane segment at 82 to 102 (AMMVTSSAISSLACIVSVVGM) threads the bilayer. Topologically, residues 103-116 (RCTVFCQDSRAKDR) are cytoplasmic. Residues 117–137 (LAVVGGVFFIIGGLLGFIPVA) traverse the membrane as a helical segment. Over 138-162 (WNLHGILRDFYSPLVPDSMKFEIGE) the chain is Extracellular. The helical transmembrane segment at 163-183 (ALYLGIISSLFSLVAGIILCF) threads the bilayer. The Cytoplasmic segment spans residues 184 to 230 (SCPLQGNRSDYYDSYQAQPLATRGSPRPGQPPKAKSEFNSYSLTGYV). Positions 205-230 (TRGSPRPGQPPKAKSEFNSYSLTGYV) are disordered. A Glycyl lysine isopeptide (Lys-Gly) (interchain with G-Cter in SUMO) cross-link involves residue K218. 2 positions are modified to phosphoserine: S219 and S223. A compositionally biased stretch (polar residues) spans 220 to 230 (EFNSYSLTGYV). Residues 229–230 (YV) form an interaction with TJP1, TJP2 and TJP3 region.

The protein belongs to the claudin family. In terms of assembly, can form homo- and heteropolymers with other claudins to mediate paracellular barrier and channel functions of tight junctions in response to physiological stimuli. Homopolymers interact with CLDN3, but not CLDN1, homopolymers. Directly interacts with TJP1/ZO-1, TJP2/ZO-2 and TJP3/ZO-3. Post-translationally, the disulfide bond is necessary for pore formation, but is not required for correct protein trafficking.

It is found in the cell junction. Its subcellular location is the tight junction. The protein resides in the cell membrane. It carries out the reaction Na(+)(in) = Na(+)(out). The enzyme catalyses K(+)(in) = K(+)(out). It catalyses the reaction Rb(+)(in) = Rb(+)(out). The catalysed reaction is Li(+)(in) = Li(+)(out). It carries out the reaction Cs(+)(in) = Cs(+)(out). The enzyme catalyses Ca(2+)(in) = Ca(2+)(out). It catalyses the reaction methylamine(out) = methylamine(in). The catalysed reaction is choline(out) = choline(in). It carries out the reaction H2O(in) = H2O(out). Its function is as follows. Forms paracellular channels: polymerizes in tight junction strands with cation- and water-selective channels through the strands, conveying epithelial permeability in a process known as paracellular tight junction permeability. In intestinal epithelium, allows for sodium and water fluxes from the peritoneal side to the lumen of the intestine to regulate nutrient absorption and clear enteric pathogens as part of mucosal immune response. In kidney, allows passive sodium and calcium reabsorption across proximal tubules from the lumen back to the bloodstream. In the hepatobiliary tract, allows paracellular water and cation fluxes in the hepatic perivenous areas and biliary epithelium to generate bile flow and maintain osmotic gradients. The protein is Claudin-2 (CLDN2) of Canis lupus familiaris (Dog).